The sequence spans 419 residues: UDP-N-acetylglucosamine 1-carboxyvinyltransferase (419 aa).

22–23 is a binding site for phosphoenolpyruvate; sequence KN. Arg-92 is a UDP-N-acetyl-alpha-D-glucosamine binding site. The Proton donor role is filled by Cys-116. Cys-116 carries the post-translational modification 2-(S-cysteinyl)pyruvic acid O-phosphothioketal. UDP-N-acetyl-alpha-D-glucosamine contacts are provided by residues 121-125, Asp-306, and Ile-328; that span reads RPIDL.

Belongs to the EPSP synthase family. MurA subfamily.

The protein resides in the cytoplasm. It carries out the reaction phosphoenolpyruvate + UDP-N-acetyl-alpha-D-glucosamine = UDP-N-acetyl-3-O-(1-carboxyvinyl)-alpha-D-glucosamine + phosphate. It functions in the pathway cell wall biogenesis; peptidoglycan biosynthesis. Cell wall formation. Adds enolpyruvyl to UDP-N-acetylglucosamine. Target for the antibiotic fosfomycin. Involved in heteroresistance to antibiotic fosfomycin. Heteroresistance is the ability of a clonal population to grow one or several subpopulations at a frequency of 10(-7) to 10(-3) in the presence of a higher antibiotic concentration than that predicted to be effective by measurement of the minimum inhibitory concentration (MIC). This Streptococcus pneumoniae serotype 2 (strain D39 / NCTC 7466) protein is UDP-N-acetylglucosamine 1-carboxyvinyltransferase.